The chain runs to 329 residues: Phosphate acyltransferase (329 aa).

This sequence belongs to the PlsX family. In terms of assembly, homodimer. Probably interacts with PlsY.

It is found in the cytoplasm. The enzyme catalyses a fatty acyl-[ACP] + phosphate = an acyl phosphate + holo-[ACP]. It participates in lipid metabolism; phospholipid metabolism. Functionally, catalyzes the reversible formation of acyl-phosphate (acyl-PO(4)) from acyl-[acyl-carrier-protein] (acyl-ACP). This enzyme utilizes acyl-ACP as fatty acyl donor, but not acyl-CoA. The chain is Phosphate acyltransferase from Campylobacter lari (strain RM2100 / D67 / ATCC BAA-1060).